The sequence spans 953 residues: Protein ENHANCER OF LHP1 1 (953 aa).

WD repeat units lie at residues 15–55 (GGSA…TLPP), 60–99 (HHQD…FQTN), 102–143 (RFTL…RVLK), 144–183 (GHKG…VSFT), 192–232 (GFNT…KLFA), 236–275 (DHLE…DIDR), and 277–316 (KFEE…SMLS). 3 disordered regions span residues 347 to 370 (SESL…RKRL), 385 to 419 (EELN…GAFK), and 851 to 877 (ESKV…SATK). Residues 349 to 359 (SLDDAMGDSDD) show a composition bias toward acidic residues. Residues 853 to 877 (KVQNPPASIQTSENTEAVMKSSATK) are compositionally biased toward polar residues. The Nuclear localization signal signature appears at 900–907 (TKKDKSDD). The disordered stretch occupies residues 919–953 (KNPVNNVNKEDKGQEKEVNQGEARRSSNPFLKSTV). Positions 926–943 (NKEDKGQEKEVNQGEARR) are enriched in basic and acidic residues. Positions 944-953 (SSNPFLKSTV) are enriched in polar residues.

Interacts with EZA1/SWN, LHP1, SLD5 and CLF in the nucleus. As to expression, expressed in root meristematic zones, initiating lateral roots, young leaves and the shoot apex.

It localises to the nucleus. Functionally, participates in maintaining the H3K27me3 mark at target genes by interacting with LHP1-PRC2 complexes during replication, thus contributing to H3K27me3 inheritance. The polypeptide is Protein ENHANCER OF LHP1 1 (Arabidopsis thaliana (Mouse-ear cress)).